The chain runs to 413 residues: Eukaryotic initiation factor 4A-7 (413 aa).

A Q motif motif is present at residues 40–68 (DSFDAMGLQENLLRGIYAYGFEKPSAIQQ). Residues 71 to 241 (IVPFCKGLDV…RKFMNKPVRI (171 aa)) form the Helicase ATP-binding domain. 84-91 (AQSGTGKT) serves as a coordination point for ATP. A DEAD box motif is present at residues 189-192 (DEAD). The 162-residue stretch at 252-413 (GIKQFYVNVD…ELPANVADLL (162 aa)) folds into the Helicase C-terminal domain.

This sequence belongs to the DEAD box helicase family. eIF4A subfamily. EIF4F is a multi-subunit complex, the composition of which varies with external and internal environmental conditions. It is composed of at least EIF4A, EIF4E and EIF4G.

It catalyses the reaction ATP + H2O = ADP + phosphate + H(+). In terms of biological role, ATP-dependent RNA helicase which is a subunit of the eIF4F complex involved in cap recognition and is required for mRNA binding to ribosome. In the current model of translation initiation, eIF4A unwinds RNA secondary structures in the 5'-UTR of mRNAs which is necessary to allow efficient binding of the small ribosomal subunit, and subsequent scanning for the initiator codon. The protein is Eukaryotic initiation factor 4A-7 of Nicotiana tabacum (Common tobacco).